Here is a 255-residue protein sequence, read N- to C-terminus: 5'-nucleotidase SurE (255 aa).

A divalent metal cation contacts are provided by Asp8, Asp9, Ser39, and Asn91.

This sequence belongs to the SurE nucleotidase family. The cofactor is a divalent metal cation.

It is found in the cytoplasm. The enzyme catalyses a ribonucleoside 5'-phosphate + H2O = a ribonucleoside + phosphate. Nucleotidase that shows phosphatase activity on nucleoside 5'-monophosphates. The protein is 5'-nucleotidase SurE of Acinetobacter baumannii (strain SDF).